An 81-amino-acid polypeptide reads, in one-letter code: UPF0434 protein msl4429 (81 aa).

It belongs to the UPF0434 family.

The protein is UPF0434 protein msl4429 of Mesorhizobium japonicum (strain LMG 29417 / CECT 9101 / MAFF 303099) (Mesorhizobium loti (strain MAFF 303099)).